The sequence spans 124 residues: Large ribosomal subunit protein bL17 (124 aa).

The protein belongs to the bacterial ribosomal protein bL17 family. In terms of assembly, part of the 50S ribosomal subunit. Contacts protein L32.

The chain is Large ribosomal subunit protein bL17 from Borrelia turicatae (strain 91E135).